Reading from the N-terminus, the 236-residue chain is 2-C-methyl-D-erythritol 4-phosphate cytidylyltransferase (236 aa).

The protein belongs to the IspD/TarI cytidylyltransferase family. IspD subfamily.

It carries out the reaction 2-C-methyl-D-erythritol 4-phosphate + CTP + H(+) = 4-CDP-2-C-methyl-D-erythritol + diphosphate. Its pathway is isoprenoid biosynthesis; isopentenyl diphosphate biosynthesis via DXP pathway; isopentenyl diphosphate from 1-deoxy-D-xylulose 5-phosphate: step 2/6. Catalyzes the formation of 4-diphosphocytidyl-2-C-methyl-D-erythritol from CTP and 2-C-methyl-D-erythritol 4-phosphate (MEP). The chain is 2-C-methyl-D-erythritol 4-phosphate cytidylyltransferase from Burkholderia pseudomallei (strain 1106a).